Here is a 318-residue protein sequence, read N- to C-terminus: MDNGVQEGSVRLGEDAEAVLAGAVSTKANHRQVLSSLLSGALAGALAKTAVAPLDRTKIIFQVSSKRFSAKEAFRLLYFTYLNEGFLSLWRGNSATMVRVIPYAAIQFSAHEEYKRILGHYYGFRGEALPPWPRLLAGALAGTTAASLTYPLDLVRARMAVTPKEMYSNIFHVFIRISREEGLKTLYFGFTPTVLGVIPYAGLSFFTYESLKSLHREYSGRPQPYPFERMVFGACAGLIGQSASYPLDVVRRRMQTAGVTGHQHGSILSTLRSIVREEGAVRGLYKGLSMNWLKGPIAVGISFTTFDLMQILLRQLQS.

3 Solcar repeats span residues 31–117 (RQVL…YKRI), 129–214 (LPPW…LKSL), and 224–312 (PYPF…MQIL). Helical transmembrane passes span 33 to 53 (VLSSLLSGALAGALAKTAVAP), 89 to 109 (LWRGNSATMVRVIPYAAIQFS), 135 to 155 (LLAGALAGTTAASLTYPLDLV), 186 to 206 (LYFGFTPTVLGVIPYAGLSFF), 230 to 250 (MVFGACAGLIGQSASYPLDVV), and 293 to 313 (LKGPIAVGISFTTFDLMQILL).

The protein belongs to the mitochondrial carrier (TC 2.A.29) family. In terms of tissue distribution, widely expressed. Highly expressed in adipose, followed by hypothalamus and brain coronal sections containing corpus callosum, fornix, thalamus, hypothalamus, optic chiasm, pons, midbrain, and cerebellum.

It is found in the mitochondrion inner membrane. The catalysed reaction is ADP(out) + CoA(in) = ADP(in) + CoA(out). It catalyses the reaction 3'-dephospho-CoA(in) + ADP(out) = 3'-dephospho-CoA(out) + ADP(in). The enzyme catalyses adenosine 3',5'-bisphosphate(in) + ADP(out) = adenosine 3',5'-bisphosphate(out) + ADP(in). It carries out the reaction AMP(in) + ADP(out) = AMP(out) + ADP(in). The catalysed reaction is dADP(in) + ADP(out) = dADP(out) + ADP(in). It catalyses the reaction ADP(in) + ATP(out) = ADP(out) + ATP(in). Its function is as follows. Mitochondrial carrier mediating the transport of coenzyme A (CoA) in mitochondria in exchange for intramitochondrial (deoxy)adenine nucleotides and adenosine 3',5'-diphosphate. This Rattus norvegicus (Rat) protein is Mitochondrial coenzyme A transporter SLC25A42 (Slc25a42).